The following is a 133-amino-acid chain: uncharacterized protein (133 aa).

This is an uncharacterized protein from Escherichia coli O157:H7.